An 87-amino-acid polypeptide reads, in one-letter code: Acyl-CoA-binding protein (87 aa).

The residue at position 2 (S2) is an N-acetylserine. The region spanning 2 to 87 (SQADFDKAAE…VEELKKKYGI (86 aa)) is the ACB domain. The residue at position 8 (K8) is an N6-acetyllysine; alternate. Residue K8 is modified to N6-succinyllysine; alternate. K14 lines the an acyl-CoA pocket. At K17 the chain carries N6-succinyllysine. Phosphotyrosine is present on Y29. Residues 29–33 (YSHFK), K51, K55, and Y74 each bind an acyl-CoA. K51 carries the post-translational modification N6-acetyllysine. K55 is subject to N6-acetyllysine; alternate. K55 is subject to N6-succinyllysine; alternate. Position 55 is an N6-(2-hydroxyisobutyryl)lysine; alternate (K55). Position 55 is an N6-malonyllysine; alternate (K55). K77 carries the N6-acetyllysine; alternate modification. N6-succinyllysine; alternate is present on K77.

Belongs to the ACBP family. Monomer.

The protein localises to the endoplasmic reticulum. The protein resides in the golgi apparatus. Binds medium- and long-chain acyl-CoA esters with very high affinity and may function as an intracellular carrier of acyl-CoA esters. It is also able to displace diazepam from the benzodiazepine (BZD) recognition site located on the GABA type A receptor. It is therefore possible that this protein also acts as a neuropeptide to modulate the action of the GABA receptor. The sequence is that of Acyl-CoA-binding protein (Dbi) from Rattus norvegicus (Rat).